A 35-amino-acid chain; its full sequence is MEVNILAFIATALFILVPTAFLLIIYVKTESQNKK.

A helical membrane pass occupies residues 5–25 (ILAFIATALFILVPTAFLLII).

The protein belongs to the PsbM family. PSII is composed of 1 copy each of membrane proteins PsbA, PsbB, PsbC, PsbD, PsbE, PsbF, PsbH, PsbI, PsbJ, PsbK, PsbL, PsbM, PsbT, PsbX, PsbY, PsbZ, Psb30/Ycf12, at least 3 peripheral proteins of the oxygen-evolving complex and a large number of cofactors. It forms dimeric complexes.

The protein localises to the plastid. The protein resides in the chloroplast thylakoid membrane. In terms of biological role, one of the components of the core complex of photosystem II (PSII). PSII is a light-driven water:plastoquinone oxidoreductase that uses light energy to abstract electrons from H(2)O, generating O(2) and a proton gradient subsequently used for ATP formation. It consists of a core antenna complex that captures photons, and an electron transfer chain that converts photonic excitation into a charge separation. This subunit is found at the monomer-monomer interface. The sequence is that of Photosystem II reaction center protein M from Panax quinquefolius (American ginseng).